A 495-amino-acid chain; its full sequence is Monoamine oxidase N (495 aa).

Residues 1-19 (MTSRDGYQWTPETGLTQGV) are compositionally biased toward polar residues. Residues 1-23 (MTSRDGYQWTPETGLTQGVPSLG) form a disordered region. Positions 493–495 (ARL) match the Microbody targeting signal motif.

Belongs to the flavin monoamine oxidase family. It depends on FAD as a cofactor.

It localises to the peroxisome. The enzyme catalyses a secondary aliphatic amine + O2 + H2O = a primary amine + an aldehyde + H2O2. This is Monoamine oxidase N (maoN) from Aspergillus niger.